Consider the following 1511-residue polypeptide: ATP-dependent permease PDR12 (1511 aa).

Positions 1-21 (MSSTDEHIEKDISSRSNHDDD) are enriched in basic and acidic residues. Residues 1–37 (MSSTDEHIEKDISSRSNHDDDYANSVQSYAASEGQVD) are disordered. N-acetylserine is present on Ser2. Over 2–508 (SSTDEHIEKD…RGFQRVKGDS (507 aa)) the chain is Cytoplasmic. 3 positions are modified to phosphoserine: Ser32, Ser52, and Ser56. Residues 144 to 397 (IPAHLISKFT…FQRMGWVKPN (254 aa)) form the ABC transporter 1 domain. Lys426 participates in a covalent cross-link: Glycyl lysine isopeptide (Lys-Gly) (interchain with G-Cter in ubiquitin). A helical membrane pass occupies residues 509-529 (TYTKVYLSSFLIKALIIGSMF). Topologically, residues 530-548 (HKIDDKSQSTTAGAYSRGG) are extracellular. A helical transmembrane segment spans residues 549–569 (MLFYVLLFASVTSLAEIGNSF). Over 570–597 (SSRPVIVKHKSYSMYHLSAESLQEIITE) the chain is Cytoplasmic. A helical transmembrane segment spans residues 598 to 618 (FPTKFVAIVILCLITYWIPFM). Over 619–622 (KYEA) the chain is Extracellular. The chain crosses the membrane as a helical span at residues 623-643 (GAFFQYILYLLTVQQCTSFIF). Topologically, residues 644–657 (KFVATMSKSGVDAH) are cytoplasmic. Residues 658-678 (AVGGLWVLMLCVYAGFVLPIG) traverse the membrane as a helical segment. Residues 679–765 (EMHHWIRWLH…FAYKHAWRNW (87 aa)) are Extracellular-facing. Residues 766-786 (GVNIVWTFGYIVFNVILSEYL) traverse the membrane as a helical segment. Residues 787 to 1182 (KPVEGGGDLL…WRSPVYIRAK (396 aa)) lie on the Cytoplasmic side of the membrane. Residues 836 to 1084 (IAEKDVFTWN…TLLKYFERQS (249 aa)) enclose the ABC transporter 2 domain. Residues 878 to 885 (GESGAGKT) and 972 to 979 (AEALVGKT) each bind ATP. The helical transmembrane segment at 1183–1203 (FFECVACALFVGLSYVGVNHS) threads the bilayer. A topological domain (extracellular) is located at residue Val1204. The chain crosses the membrane as a helical span at residues 1205–1225 (GGAIEAFSSIFMLLLIALAMI). Topologically, residues 1226 to 1254 (NQLHVFAYDSRELYEVREAASNTFHWSVL) are cytoplasmic. A helical transmembrane segment spans residues 1255-1275 (LLCHAAVENFWSTLCQFMCFI). Over 1276–1291 (CYYWPAQFSGRASHAG) the chain is Extracellular. A helical membrane pass occupies residues 1292-1312 (FFFFFYVLIFPLYFVTYGLWI). Over 1313 to 1318 (LYMSPD) the chain is Cytoplasmic. A helical membrane pass occupies residues 1319–1339 (VPSASMINSNLFAAMLLFCGI). At 1340–1444 (LQPREKMPAF…NVKWDHRWRN (105 aa)) the chain is on the extracellular side. N-linked (GlcNAc...) asparagine glycosylation is present at Asn1405. A helical membrane pass occupies residues 1445 to 1465 (FGFMWAYICFNIAAMLICYYV). Residues 1466 to 1511 (VRVKVWSLKSVLNFKKWFNGPRKERHEKDTNIFQTVPGDENKITKK) are Cytoplasmic-facing.

It belongs to the ABC transporter superfamily. ABCG family. PDR (TC 3.A.1.205) subfamily.

It localises to the cell membrane. Functionally, plasma membrane transporter which mediates resistance to water-soluble, monocarboxylic acids with chain lengths of from C1 to C7 by active extrusion of the preservative anions from the cytosol. Also involved in the export of aromatic and branched-chain organic acids produced in amino acid catabolism. This is ATP-dependent permease PDR12 (PDR12) from Saccharomyces cerevisiae (strain ATCC 204508 / S288c) (Baker's yeast).